The chain runs to 880 residues: Valine--tRNA ligase (880 aa).

The short motif at 48–58 (PNITGKLHLGH) is the 'HIGH' region element. The short motif at 527–531 (KMSKS) is the 'KMSKS' region element. Lysine 530 is a binding site for ATP. 2 coiled-coil regions span residues 717–741 (KEEL…AIRN) and 810–880 (LFDL…KSLK).

The protein belongs to the class-I aminoacyl-tRNA synthetase family. ValS type 1 subfamily. Monomer.

The protein resides in the cytoplasm. It carries out the reaction tRNA(Val) + L-valine + ATP = L-valyl-tRNA(Val) + AMP + diphosphate. Catalyzes the attachment of valine to tRNA(Val). As ValRS can inadvertently accommodate and process structurally similar amino acids such as threonine, to avoid such errors, it has a 'posttransfer' editing activity that hydrolyzes mischarged Thr-tRNA(Val) in a tRNA-dependent manner. The polypeptide is Valine--tRNA ligase (Clostridium tetani (strain Massachusetts / E88)).